Consider the following 291-residue polypeptide: MFLLITYPVFDPVAISLGPIAIRWYALAYIGGIMLGWLYARALLKSEKLWGGPAPISGLQLDDFILWVTIGIILGGRTGYVLFYNLDFFIRHPAEIFEIWKGGMSFHGGFMGCVVAVILFCRKHGLPILSLGDVATAVGPIGLFLGRIANFINSELWGRPADPSLPWAMVFPNGGPLPRHPSQLYEATLEGLVLFTILALMIRAGALKRPGLVLGSFITLYAMARIAGEFFREPDPQLGFLWGGLTMGMLLSAPMIIAGLAIICVAWSRGPRAPVAQTISTPDVSTKADRD.

Helical transmembrane passes span 24 to 44 (WYALAYIGGIMLGWLYARALL), 64 to 84 (FILWVTIGIILGGRTGYVLFY), 99 to 119 (IWKGGMSFHGGFMGCVVAVIL), and 125 to 145 (GLPILSLGDVATAVGPIGLFL). R147 serves as a coordination point for a 1,2-diacyl-sn-glycero-3-phospho-(1'-sn-glycerol). The next 3 membrane-spanning stretches (helical) occupy residues 187–207 (ATLEGLVLFTILALMIRAGAL), 211–231 (GLVLGSFITLYAMARIAGEFF), and 247–267 (MGMLLSAPMIIAGLAIICVAW).

The protein belongs to the Lgt family.

Its subcellular location is the cell inner membrane. It carries out the reaction L-cysteinyl-[prolipoprotein] + a 1,2-diacyl-sn-glycero-3-phospho-(1'-sn-glycerol) = an S-1,2-diacyl-sn-glyceryl-L-cysteinyl-[prolipoprotein] + sn-glycerol 1-phosphate + H(+). It functions in the pathway protein modification; lipoprotein biosynthesis (diacylglyceryl transfer). Functionally, catalyzes the transfer of the diacylglyceryl group from phosphatidylglycerol to the sulfhydryl group of the N-terminal cysteine of a prolipoprotein, the first step in the formation of mature lipoproteins. The sequence is that of Phosphatidylglycerol--prolipoprotein diacylglyceryl transferase from Nitrobacter hamburgensis (strain DSM 10229 / NCIMB 13809 / X14).